Reading from the N-terminus, the 159-residue chain is MARRNKAKKREISPDSRYGSVLLMRFINTIMKCGKKSTAEKIIYDALSLAEKKIGEGGLSIFETAVGNVTPSIEVRSRRIGGATYQVPVEVRQDRAVSLALRWIAKATSAARKKSGKTTVDCLQSEILDAYNKRGGAFKMCEEKYKMAEANKAFSHLRF.

The protein belongs to the universal ribosomal protein uS7 family. Part of the 30S ribosomal subunit. Contacts proteins S9 and S11.

In terms of biological role, one of the primary rRNA binding proteins, it binds directly to 16S rRNA where it nucleates assembly of the head domain of the 30S subunit. Is located at the subunit interface close to the decoding center, probably blocks exit of the E-site tRNA. This chain is Small ribosomal subunit protein uS7, found in Wolbachia pipientis wMel.